The primary structure comprises 170 residues: uncharacterized protein (170 aa).

An N-terminal signal peptide occupies residues 1–26; the sequence is MLKKKWMVGLLAGCLAAGGFSYNAFA.

This is an uncharacterized protein from Bacillus subtilis (strain 168).